Consider the following 346-residue polypeptide: Farnesyl diphosphate synthase 1 (346 aa).

Lysine 52, arginine 55, and glutamine 90 together coordinate isopentenyl diphosphate. Mg(2+) is bound by residues aspartate 97 and aspartate 101. Residues 97–101 (DDIMD) carry the DDXXD motif motif. Dimethylallyl diphosphate is bound at residue arginine 106. Arginine 107 is a binding site for isopentenyl diphosphate. Dimethylallyl diphosphate is bound by residues lysine 194, threonine 195, and glutamine 233. The DDXXD motif motif lies at 236 to 240 (DDYLD). Lysine 250 and lysine 259 together coordinate dimethylallyl diphosphate.

The protein belongs to the FPP/GGPP synthase family. Requires Mg(2+) as cofactor. Mn(2+) is required as a cofactor. Highly expressed in shoots.

It catalyses the reaction isopentenyl diphosphate + (2E)-geranyl diphosphate = (2E,6E)-farnesyl diphosphate + diphosphate. The catalysed reaction is isopentenyl diphosphate + dimethylallyl diphosphate = (2E)-geranyl diphosphate + diphosphate. It functions in the pathway isoprenoid biosynthesis; farnesyl diphosphate biosynthesis; farnesyl diphosphate from geranyl diphosphate and isopentenyl diphosphate: step 1/1. It participates in isoprenoid biosynthesis; geranyl diphosphate biosynthesis; geranyl diphosphate from dimethylallyl diphosphate and isopentenyl diphosphate: step 1/1. Functionally, catalyzes the sequential condensation of isopentenyl pyrophosphate (IPP) with the allylic pyrophosphates, dimethylallyl pyrophosphate (DMAPP), and then with the resultant geranylpyrophosphate (GPP) to the ultimate product farnesyl pyrophosphate (FPP). Has a 4.5 time greater affinity for GPP versus DMAPP. This chain is Farnesyl diphosphate synthase 1 (FDS-1), found in Artemisia spiciformis (Spiked big sagebrush).